A 91-amino-acid polypeptide reads, in one-letter code: C-C motif chemokine 5 (91 aa).

The first 23 residues, 1 to 23 (MKISAAVLTVVLMAASLCAPASA), serve as a signal peptide directing secretion. Cystine bridges form between cysteine 33–cysteine 57 and cysteine 34–cysteine 73.

This sequence belongs to the intercrine beta (chemokine CC) family.

The protein localises to the secreted. Chemoattractant for blood monocytes, memory T-helper cells and eosinophils. Causes the release of histamine from basophils and activates eosinophils. May activate several chemokine receptors including CCR1, CCR3, CCR4 and CCR5. May also be an agonist of the G protein-coupled receptor GPR75. Together with GPR75, may play a role in neuron survival through activation of a downstream signaling pathway involving the PI3, Akt and MAP kinases. By activating GPR75 may also play a role in insulin secretion by islet cells. This chain is C-C motif chemokine 5 (CCL5), found in Sigmodon hispidus (Hispid cotton rat).